A 55-amino-acid chain; its full sequence is UPF0391 membrane protein RSp1666 (55 aa).

2 helical membrane-spanning segments follow: residues 5-25 (AVIF…GIAA) and 33-53 (ILFM…LVAG).

The protein belongs to the UPF0391 family.

The protein localises to the cell membrane. This is UPF0391 membrane protein RSp1666 from Ralstonia nicotianae (strain ATCC BAA-1114 / GMI1000) (Ralstonia solanacearum).